Consider the following 480-residue polypeptide: MPKEGITPRAQDYSQWYLDIVQQADLADYAEVVKGCIVFKPTGYAIWEAIQRGLDDRIKATGHVNAYFPLLIPKSFLMKEAEHVEGFAPEVAEVTRAGGEDLAEPYVIRPTSETIIGYFYSKWVRSYRDLPLLINQWANVMRWEMRTRPFLRTTEFLWQEGHTVHATEEDAERETLLILHEVYADFVEKEMAIPVIKGLKSEKEKFPGALRSYCIEAMMQDGRALQAGTSHNLGQNFARAFDITYTDQQNTIQYAWTTSWGVSTRLIGALIMTHSDDEGLVIPPRLAPTQVVVVPIYRNDAERSVVMEAVQRMTAEWKGRLRFKIDDRDNLTPGFKFNEWELKGVPIRVEIGPKDIEKGSVAIARRDQPGREGKSFVPQDGLTDRLTALLEEIQQALYRRALTFREDHTADVATYDELKQQVERGFARCYWAGTTEDEKRIQEETRATIRCIPLDQPQQAGRCVYTGKETTQQVIFARAY.

This sequence belongs to the class-II aminoacyl-tRNA synthetase family. ProS type 3 subfamily. Homodimer.

Its subcellular location is the cytoplasm. The enzyme catalyses tRNA(Pro) + L-proline + ATP = L-prolyl-tRNA(Pro) + AMP + diphosphate. Its function is as follows. Catalyzes the attachment of proline to tRNA(Pro) in a two-step reaction: proline is first activated by ATP to form Pro-AMP and then transferred to the acceptor end of tRNA(Pro). The protein is Proline--tRNA ligase of Roseiflexus sp. (strain RS-1).